The chain runs to 1123 residues: Probable serine/threonine-protein kinase nek3 (1123 aa).

Residues 4–264 (YEEIKTIGKG…VNDILELPFI (261 aa)) form the Protein kinase domain. ATP is bound by residues 10–18 (IGKGSFGRA) and Lys33. Asp130 acts as the Proton acceptor in catalysis. 2 stretches are compositionally biased toward low complexity: residues 283–307 (NNDS…ISSS) and 327–415 (NNNN…TSLK). Disordered stretches follow at residues 283-310 (NNDS…STEV), 325-415 (NINN…TSLK), 440-802 (SKTP…TNSQ), 866-887 (SAST…TNTM), 908-937 (SVKL…SITD), and 990-1020 (SLNN…NQNN). Residues 440 to 459 (SKTPISGTKNPTTSKITPSI) are compositionally biased toward polar residues. 4 stretches are compositionally biased toward low complexity: residues 478–529 (SKPT…SSSV), 557–576 (SNLS…SNSQ), 588–617 (SPTS…SLKS), and 642–653 (NGNSNVNSTVLN). Polar residues predominate over residues 654–665 (RSVSSLSIQHKP). 3 stretches are compositionally biased toward low complexity: residues 666-696 (TNSG…TSTT), 712-738 (STPT…TPST), and 752-802 (SSNG…TNSQ). The span at 908 to 935 (SVKLSSKSSSPIKTSSSSSSSSSSSSSI) shows a compositional bias: low complexity.

It belongs to the protein kinase superfamily. NEK Ser/Thr protein kinase family. NIMA subfamily.

It carries out the reaction L-seryl-[protein] + ATP = O-phospho-L-seryl-[protein] + ADP + H(+). The catalysed reaction is L-threonyl-[protein] + ATP = O-phospho-L-threonyl-[protein] + ADP + H(+). In Dictyostelium discoideum (Social amoeba), this protein is Probable serine/threonine-protein kinase nek3 (nek3).